The following is a 276-amino-acid chain: Thiazole synthase (276 aa).

Residue K112 is the Schiff-base intermediate with DXP of the active site. Residues G173, 199-200 (AG), and 221-222 (NT) contribute to the 1-deoxy-D-xylulose 5-phosphate site.

This sequence belongs to the ThiG family. As to quaternary structure, homotetramer. Forms heterodimers with either ThiH or ThiS.

The protein resides in the cytoplasm. It catalyses the reaction [ThiS sulfur-carrier protein]-C-terminal-Gly-aminoethanethioate + 2-iminoacetate + 1-deoxy-D-xylulose 5-phosphate = [ThiS sulfur-carrier protein]-C-terminal Gly-Gly + 2-[(2R,5Z)-2-carboxy-4-methylthiazol-5(2H)-ylidene]ethyl phosphate + 2 H2O + H(+). It participates in cofactor biosynthesis; thiamine diphosphate biosynthesis. Its function is as follows. Catalyzes the rearrangement of 1-deoxy-D-xylulose 5-phosphate (DXP) to produce the thiazole phosphate moiety of thiamine. Sulfur is provided by the thiocarboxylate moiety of the carrier protein ThiS. In vitro, sulfur can be provided by H(2)S. The sequence is that of Thiazole synthase from Synechococcus sp. (strain ATCC 27144 / PCC 6301 / SAUG 1402/1) (Anacystis nidulans).